Consider the following 283-residue polypeptide: S-adenosylmethionine mitochondrial carrier protein homolog (283 aa).

3 Solcar repeats span residues 11 to 84 (LKFF…GKQF), 93 to 178 (DSPY…FKLQ), and 187 to 275 (STPF…TTRI). A run of 6 helical transmembrane segments spans residues 14–34 (FHAL…LFPI), 55–75 (GIYK…ALFF), 99–119 (MAAA…VEIA), 152–172 (RGFG…FPLW), 190–210 (FSVA…TTPL), and 248–268 (FAGF…FFGF).

It belongs to the mitochondrial carrier (TC 2.A.29) family.

It is found in the mitochondrion inner membrane. Mitochondrial solute carriers shuttle metabolites, nucleotides, and cofactors through the mitochondrial inner membrane. May mediate the transport of S-adenosylmethionine (SAM) into the mitochondria. This is S-adenosylmethionine mitochondrial carrier protein homolog from Drosophila melanogaster (Fruit fly).